We begin with the raw amino-acid sequence, 306 residues long: ADP,ATP carrier protein ER-ANT1 (306 aa).

Solcar repeat units lie at residues Glu-8 to Leu-101, Lys-113 to Ile-205, and Gly-213 to Ile-299. The next 5 helical transmembrane spans lie at Phe-10 to Leu-37, Gln-78 to Leu-102, Tyr-111 to Leu-131, Phe-181 to Ile-202, and Leu-216 to Phe-236. ADP contacts are provided by Arg-83 and Lys-95. An ADP-binding site is contributed by Arg-240. The interval Arg-240–Leu-245 is important for transport activity. Residues Arg-240–Leu-245 carry the Nucleotide carrier signature motif motif. Residues Val-276–Leu-296 form a helical membrane-spanning segment.

It belongs to the mitochondrial carrier (TC 2.A.29) family.

It localises to the endoplasmic reticulum membrane. It carries out the reaction ADP(in) + ATP(out) = ADP(out) + ATP(in). In terms of biological role, ADP:ATP antiporter that catalyzes the exchange of ADP and ATP across the endoplasmic reticulum membrane. This is ADP,ATP carrier protein ER-ANT1 (ER-ANT1) from Arabidopsis thaliana (Mouse-ear cress).